A 233-amino-acid polypeptide reads, in one-letter code: Large ribosomal subunit protein uL3 (233 aa).

The segment at 146–171 is disordered; it reads GSQRASHGNSRSHRVPGSIGQAQDPG. Gln-168 carries the post-translational modification N5-methylglutamine.

Belongs to the universal ribosomal protein uL3 family. As to quaternary structure, part of the 50S ribosomal subunit. Forms a cluster with proteins L14 and L19. Post-translationally, methylated by PrmB.

Its function is as follows. One of the primary rRNA binding proteins, it binds directly near the 3'-end of the 23S rRNA, where it nucleates assembly of the 50S subunit. The chain is Large ribosomal subunit protein uL3 from Bordetella bronchiseptica (strain ATCC BAA-588 / NCTC 13252 / RB50) (Alcaligenes bronchisepticus).